We begin with the raw amino-acid sequence, 1682 residues long: Collagen alpha-4(IV) chain (1682 aa).

The first 32 residues, 1-32, serve as a signal peptide directing secretion; sequence MRCFFRWTKSFVTAPWSLIFILFTIQYEYGSG. A 7S domain region spans residues 31-56; the sequence is SGKKYGGPCGGRNCSVCQCFPEKGSR. An N-linked (GlcNAc...) asparagine glycan is attached at Asn43. Disordered regions lie at residues 56 to 255 and 379 to 1453; these read RGHP…VQPP and PGPP…FGPG. The segment at 57–1451 is triple-helical region; it reads GHPGPLGPQG…TGDPGPKGFG (1395 aa). The short motif at 86–88 is the Cell attachment site element; the sequence is RGD. Positions 103–116 are enriched in low complexity; the sequence is PTGVPGFPGVDGVP. The N-linked (GlcNAc...) asparagine glycan is linked to Asn134. 2 short sequence motifs (cell attachment site) span residues 137–139 and 181–183; these read RGD. A compositionally biased stretch (pro residues) spans 396–410; that stretch reads MGPPGPPGVPGPPGF. Over residues 411-426 the composition is skewed to low complexity; that stretch reads PGEAGVPGRLDCAPGK. The segment covering 487–500 has biased composition (pro residues); it reads PPGPMGPPGPPGPP. The span at 578 to 601 shows a compositional bias: basic and acidic residues; the sequence is DGGDGRPGERGDPGPRGDHKDAAP. 2 consecutive short sequence motifs (cell attachment site) follow at residues 587–589 and 593–595; these read RGD. Pro residues predominate over residues 609 to 621; sequence LPGPPGRTGPEGP. Positions 632-647 are enriched in low complexity; sequence QRGLPGEPGRPGTRGF. N-linked (GlcNAc...) asparagine glycosylation is present at Asn661. Residues 665–682 show a composition bias toward low complexity; it reads PGKPGLPGLDGPPGLKGF. Positions 716 to 718 match the Cell attachment site motif; sequence RGD. Low complexity-rich tracts occupy residues 742–758 and 857–902; these read PGKD…AFGD and PAGM…LPGL. Basic and acidic residues-rich tracts occupy residues 911 to 929 and 938 to 950; these read ERGK…EVGE and DLGE…DRGL. Gly residues predominate over residues 969 to 978; the sequence is GPPGDGGFSG. Short sequence motifs (cell attachment site) lie at residues 980–982 and 992–994; these read RGD. Residues 998–1010 are compositionally biased toward low complexity; sequence DGLPGLHRGQPGI. Residues 1011 to 1025 are compositionally biased toward pro residues; sequence DGPPGPPGPPGPPGS. A compositionally biased stretch (low complexity) spans 1034–1044; that stretch reads FPGFPGDQGDP. A Cell attachment site motif is present at residues 1144–1146; sequence RGD. 5 stretches are compositionally biased toward pro residues: residues 1223-1235, 1248-1272, 1289-1304, 1340-1351, and 1435-1444; these read PGPP…PGPA, DPGP…PPGS, PGPP…PGCQ, PGPPGRKGPVGP, and APGPPGPTGD. The Collagen IV NC1 domain maps to 1457–1682; sequence GFLLVLHSQT…SRCQVCMKHS (226 aa). Disulfide bonds link Cys1472–Cys1561, Cys1505–Cys1558, Cys1517–Cys1523, Cys1580–Cys1678, Cys1614–Cys1675, and Cys1626–Cys1633.

It belongs to the type IV collagen family. In terms of assembly, there are six type IV collagen isoforms, alpha 1(IV)-alpha 6(IV), each of which can form a triple helix structure with 2 other chains to generate type IV collagen network. The alpha 3(IV) chain forms a triple helical protomer with alpha 4(IV) and alpha 5(IV); this triple helical structure dimerizes through NC1-NC1 domain interactions such that the alpha 3(IV), alpha 4(IV) and alpha 5(IV) chains of one protomer connect with the alpha 5(IV), alpha 4(IV) and alpha 3(IV) chains of the opposite protomer, respectively. Associates with LAMB2 at the neuromuscular junction and in GBM. In terms of processing, prolines at the third position of the tripeptide repeating unit (G-X-Y) are hydroxylated in some or all of the chains. Post-translationally, type IV collagens contain numerous cysteine residues which are involved in inter- and intramolecular disulfide bonding. 12 of these, located in the NC1 domain, are conserved in all known type IV collagens. The trimeric structure of the NC1 domains is stabilized by covalent bonds between Lys and Met residues. In terms of tissue distribution, expressed in Bruch's membrane, outer plexiform layer, inner nuclear layer, inner plexiform layer, ganglion cell layer, inner limiting membrane and around the blood vessels of the retina (at protein level). Highly expressed in kidney and lung. Detected at lower levels in heart, muscle and skin.

It localises to the secreted. The protein localises to the extracellular space. Its subcellular location is the extracellular matrix. It is found in the basement membrane. Its function is as follows. Type IV collagen is the major structural component of glomerular basement membranes (GBM), forming a 'chicken-wire' meshwork together with laminins, proteoglycans and entactin/nidogen. This Mus musculus (Mouse) protein is Collagen alpha-4(IV) chain.